A 158-amino-acid polypeptide reads, in one-letter code: MSNNVIEKVTELVQPITDRHNFELVEVEFVKEGQGWFLRVYIDKVGGINIEECAMVSDELSEILDAQDPDPIPQAYFLEVSSPGAERPLKTKEDLTRSIGEYIHISLYASINKQKVFEGYLKSFENDEIVLDYLDKTRHKELKVTYDQVAFARLAIKI.

It belongs to the RimP family.

The protein resides in the cytoplasm. In terms of biological role, required for maturation of 30S ribosomal subunits. The protein is Ribosome maturation factor RimP of Pediococcus pentosaceus (strain ATCC 25745 / CCUG 21536 / LMG 10740 / 183-1w).